The primary structure comprises 181 residues: Small ribosomal subunit protein bS16 (181 aa).

The disordered stretch occupies residues 150 to 181 (KKAAEEAAKAAAEAPAEEAAPAEETATEAAAE). Over residues 158–181 (KAAAEAPAEEAAPAEETATEAAAE) the composition is skewed to low complexity.

The protein belongs to the bacterial ribosomal protein bS16 family.

The protein is Small ribosomal subunit protein bS16 of Bacteroides fragilis (strain YCH46).